The following is a 443-amino-acid chain: Mitochondrial enolase superfamily member 1 (443 aa).

Substrate is bound by residues 24–26 and Y34; that span reads GAD. S148 is subject to Phosphoserine. K220 lines the substrate pocket. K222 serves as the catalytic Proton donor/acceptor. D250 serves as a coordination point for Mg(2+). Residues N252, E276, E305, 355 to 357, and E386 contribute to the substrate site; that span reads HAG. The Mg(2+) site is built by E276 and E305. Residue H355 is part of the active site.

The protein belongs to the mandelate racemase/muconate lactonizing enzyme family. ENOSF1 subfamily. Mg(2+) serves as cofactor. Post-translationally, could be sumoylated.

The protein resides in the mitochondrion. It catalyses the reaction L-fuconate = 2-dehydro-3-deoxy-L-fuconate + H2O. Plays a role in the catabolism of L-fucose, a sugar that is part of the carbohydrates that are attached to cellular glycoproteins. Catalyzes the dehydration of L-fuconate to 2-keto-3-deoxy-L-fuconate by the abstraction of the 2-proton to generate an enediolate intermediate that is stabilized by the magnesium ion. The chain is Mitochondrial enolase superfamily member 1 (ENOSF1) from Homo sapiens (Human).